A 119-amino-acid polypeptide reads, in one-letter code: Phenol 2-monooxygenase, oxygenase component DmpO (119 aa).

The multicomponent enzyme phenol hydroxylase is formed by DmpL (P1 component), DmpM (P2 component), DmpN (P3 component), DmpO (P4 component) and DmpP (P5 component). The oxygenase component is a dimer composed of three subunits, DmpL, DmpN and DmpO (DmpLNO).

It catalyses the reaction phenol + NADH + O2 + H(+) = catechol + NAD(+) + H2O. Its pathway is aromatic compound metabolism; phenol degradation. Its activity is regulated as follows. Requires DmpM for efficient turnover. The activity of DmpLNO oxygenase is inhibited by dithiothreitol (DTT) by a mechanism apparently involving H(2)O(2) generation. In terms of biological role, part of a multicomponent enzyme which catalyzes the degradation of phenol and some of its methylated derivatives. DmpL, DmpN and DmpO form the oxygenase component of the complex. Required for growth on phenol and for in vitro phenol hydroxylase activity. The chain is Phenol 2-monooxygenase, oxygenase component DmpO from Pseudomonas sp. (strain CF600).